The chain runs to 212 residues: Protein DEPP1 (212 aa).

3 disordered regions span residues 20-39 (EEMLLGGPGQEPPPSPSLDD), 49-79 (QPTSVLDKATAQGQPRPPHRPAQACRKGRPA), and 113-176 (QEKQ…SDLR). Positions 113–124 (QEKQPSQRDLPR) are enriched in basic and acidic residues.

In terms of tissue distribution, expressed in various tissues, including pancreas, placenta, ovary, testis and kidney.

The protein resides in the cytoplasm. It is found in the peroxisome. Its subcellular location is the mitochondrion. Acts as a critical modulator of FOXO3-induced autophagy via increased cellular ROS. The polypeptide is Protein DEPP1 (Homo sapiens (Human)).